We begin with the raw amino-acid sequence, 71 residues long: Protein translocase subunit SecE (71 aa).

Residues 43 to 63 (VAGAGILAVGAIGFIIYVLLT) form a helical membrane-spanning segment.

This sequence belongs to the SecE/SEC61-gamma family. In terms of assembly, component of the Sec protein translocase complex. Heterotrimer consisting of SecY (alpha), SecG (beta) and SecE (gamma) subunits. The heterotrimers can form oligomers, although 1 heterotrimer is thought to be able to translocate proteins. Interacts with the ribosome. May interact with SecDF, and other proteins may be involved.

The protein resides in the cell membrane. Its function is as follows. Essential subunit of the Sec protein translocation channel SecYEG. Clamps together the 2 halves of SecY. May contact the channel plug during translocation. This chain is Protein translocase subunit SecE, found in Methanosarcina acetivorans (strain ATCC 35395 / DSM 2834 / JCM 12185 / C2A).